The primary structure comprises 235 residues: Centromere protein H (235 aa).

The disordered stretch occupies residues 1–23 (MAGRLSESVGSGPGAEAETAADP). Residues 125–145 (EIIQAHQQARVIRENLNDIRR) are a coiled coil.

This sequence belongs to the CENP-H/MCM16 family. In terms of assembly, component of the CENPA-HI complex, at least composed of CENPH, CENPI, CENPK, CENPL, CENPM, CENPO and CENPP. Interacts with NDC80.

The protein localises to the nucleus. It localises to the chromosome. The protein resides in the centromere. Its subcellular location is the kinetochore. Its function is as follows. Component of the CENPA-HI complex, a centromeric complex involved in assembly of kinetochore proteins, mitotic progression and chromosome segregation. Required for the localization of CENPC but not CENPA to the centromere. It however may be involved in incorporation of newly synthesized CENPA into centromeres via its interaction with the CENPA-NAC complex. The polypeptide is Centromere protein H (CENPH) (Gallus gallus (Chicken)).